Here is a 255-residue protein sequence, read N- to C-terminus: Ribonuclease HII (255 aa).

The region spanning 72-255 is the RNase H type-2 domain; the sequence is AIICGIDEVG…KSFEPIKSLL (184 aa). A divalent metal cation contacts are provided by Asp-78, Glu-79, and Asp-170.

This sequence belongs to the RNase HII family. Mn(2+) is required as a cofactor. It depends on Mg(2+) as a cofactor.

Its subcellular location is the cytoplasm. It carries out the reaction Endonucleolytic cleavage to 5'-phosphomonoester.. Endonuclease that specifically degrades the RNA of RNA-DNA hybrids. In Staphylococcus aureus (strain MRSA252), this protein is Ribonuclease HII.